Reading from the N-terminus, the 70-residue chain is Omega-conotoxin-like Bu1 (70 aa).

The N-terminal stretch at methionine 1–alanine 22 is a signal peptide. The propeptide occupies glutamate 23 to arginine 45. Intrachain disulfides connect cysteine 46/cysteine 61, cysteine 53/cysteine 65, and cysteine 60/cysteine 70.

This sequence belongs to the conotoxin O1 superfamily. Expressed by the venom duct.

The protein localises to the secreted. Its function is as follows. Omega-conotoxins act at presynaptic membranes, they bind and block voltage-gated calcium channels (Cav). This is Omega-conotoxin-like Bu1 from Conus bullatus (Bubble cone).